The chain runs to 345 residues: Phenylalanine--tRNA ligase alpha subunit (345 aa).

Glu-266 is a Mg(2+) binding site.

This sequence belongs to the class-II aminoacyl-tRNA synthetase family. Phe-tRNA synthetase alpha subunit type 1 subfamily. Tetramer of two alpha and two beta subunits. Mg(2+) serves as cofactor.

Its subcellular location is the cytoplasm. It carries out the reaction tRNA(Phe) + L-phenylalanine + ATP = L-phenylalanyl-tRNA(Phe) + AMP + diphosphate + H(+). This chain is Phenylalanine--tRNA ligase alpha subunit, found in Methylibium petroleiphilum (strain ATCC BAA-1232 / LMG 22953 / PM1).